The following is a 635-amino-acid chain: Threonine--tRNA ligase (635 aa).

The TGS domain maps to 1 to 62; sequence MITITLPDGS…EHDAMLRIIT (62 aa). The segment at 244–535 is catalytic; the sequence is DHRKIGKVQD…LIEHYAGIWP (292 aa). Residues cysteine 335, histidine 386, and histidine 512 each coordinate Zn(2+).

Belongs to the class-II aminoacyl-tRNA synthetase family. Homodimer. Requires Zn(2+) as cofactor.

The protein localises to the cytoplasm. It carries out the reaction tRNA(Thr) + L-threonine + ATP = L-threonyl-tRNA(Thr) + AMP + diphosphate + H(+). In terms of biological role, catalyzes the attachment of threonine to tRNA(Thr) in a two-step reaction: L-threonine is first activated by ATP to form Thr-AMP and then transferred to the acceptor end of tRNA(Thr). Also edits incorrectly charged L-seryl-tRNA(Thr). The polypeptide is Threonine--tRNA ligase (Xylella fastidiosa (strain 9a5c)).